The chain runs to 280 residues: Phosphonoacetaldehyde hydrolase (280 aa).

Asp-23 acts as the Nucleophile in catalysis. Asp-23 and Ala-25 together coordinate Mg(2+). Residue Lys-64 is the Schiff-base intermediate with substrate of the active site. Asp-197 serves as a coordination point for Mg(2+).

This sequence belongs to the HAD-like hydrolase superfamily. PhnX family. In terms of assembly, homodimer. It depends on Mg(2+) as a cofactor.

It catalyses the reaction phosphonoacetaldehyde + H2O = acetaldehyde + phosphate + H(+). Involved in phosphonate degradation. The polypeptide is Phosphonoacetaldehyde hydrolase (Bordetella avium (strain 197N)).